A 237-amino-acid polypeptide reads, in one-letter code: UPF0053 inner membrane protein YgdQ (237 aa).

The Periplasmic segment spans residues 1–17 (MLFAWITDPNAWLALGT). A helical transmembrane segment spans residues 18–38 (LTLLEIVLGIDNIIFLSLVVA). At 39–50 (KLPTAQRAHARR) the chain is on the cytoplasmic side. A helical transmembrane segment spans residues 51-71 (LGLAGAMVMRLALLASIAWVT). At 72–79 (RLTNPLFT) the chain is on the periplasmic side. A helical transmembrane segment spans residues 80 to 100 (IFSQEISARDLILLLGGLFLI). Residues 101–124 (WKASKEIHESIEGEEEGLKTRVSS) lie on the Cytoplasmic side of the membrane. The helical transmembrane segment at 125–145 (FLGAIVQIMLLDIIFSLDSVI) threads the bilayer. The Periplasmic portion of the chain corresponds to 146 to 151 (TAVGLS). A helical membrane pass occupies residues 152 to 172 (DHLFIMMAAVVIAVGVMMFAA). Residues 173–186 (RSIGDFVERHPSVK) lie on the Cytoplasmic side of the membrane. The chain crosses the membrane as a helical span at residues 187–207 (MLALSFLILVGFTLILESFDI). Residues 208-209 (HV) lie on the Periplasmic side of the membrane. Residues 210–230 (PKGYIYFAMFFSIAVESLNLI) form a helical membrane-spanning segment. Residues 231-237 (RNKKNPL) lie on the Cytoplasmic side of the membrane.

This sequence belongs to the UPF0053 family.

It localises to the cell inner membrane. This Escherichia coli O157:H7 protein is UPF0053 inner membrane protein YgdQ (ygdQ).